Consider the following 89-residue polypeptide: MALDTATKRSILAEYATTEGDTGSPEVQVALLTRRITDLTEHLKVHRHDHHSRRGLLLLVGRRRRLLRYLAKKDIARYRSLIERLGLRR.

Belongs to the universal ribosomal protein uS15 family. In terms of assembly, part of the 30S ribosomal subunit. Forms a bridge to the 50S subunit in the 70S ribosome, contacting the 23S rRNA.

One of the primary rRNA binding proteins, it binds directly to 16S rRNA where it helps nucleate assembly of the platform of the 30S subunit by binding and bridging several RNA helices of the 16S rRNA. In terms of biological role, forms an intersubunit bridge (bridge B4) with the 23S rRNA of the 50S subunit in the ribosome. The chain is Small ribosomal subunit protein uS15 from Acidothermus cellulolyticus (strain ATCC 43068 / DSM 8971 / 11B).